Consider the following 438-residue polypeptide: Glutamate-1-semialdehyde 2,1-aminomutase (438 aa).

N6-(pyridoxal phosphate)lysine is present on Lys-274.

The protein belongs to the class-III pyridoxal-phosphate-dependent aminotransferase family. HemL subfamily. As to quaternary structure, homodimer. The cofactor is pyridoxal 5'-phosphate.

Its subcellular location is the cytoplasm. It carries out the reaction (S)-4-amino-5-oxopentanoate = 5-aminolevulinate. It participates in porphyrin-containing compound metabolism; protoporphyrin-IX biosynthesis; 5-aminolevulinate from L-glutamyl-tRNA(Glu): step 2/2. The protein is Glutamate-1-semialdehyde 2,1-aminomutase of Salinibacter ruber (strain DSM 13855 / M31).